Reading from the N-terminus, the 293-residue chain is Fructose-bisphosphate aldolase (293 aa).

A D-glyceraldehyde 3-phosphate-binding site is contributed by serine 50. The active-site Proton donor is the aspartate 85. Residues histidine 86, aspartate 106, glutamate 136, and histidine 178 each coordinate Zn(2+). Glycine 179 serves as a coordination point for dihydroxyacetone phosphate. Histidine 208 serves as a coordination point for Zn(2+). Residues 209–211 and 230–233 each bind dihydroxyacetone phosphate; these read GGS and NVNT.

It belongs to the class II fructose-bisphosphate aldolase family. Zn(2+) serves as cofactor.

The catalysed reaction is beta-D-fructose 1,6-bisphosphate = D-glyceraldehyde 3-phosphate + dihydroxyacetone phosphate. It functions in the pathway carbohydrate degradation; glycolysis; D-glyceraldehyde 3-phosphate and glycerone phosphate from D-glucose: step 4/4. Functionally, catalyzes the aldol condensation of dihydroxyacetone phosphate (DHAP or glycerone-phosphate) with glyceraldehyde 3-phosphate (G3P) to form fructose 1,6-bisphosphate (FBP) in gluconeogenesis and the reverse reaction in glycolysis. The sequence is that of Fructose-bisphosphate aldolase (fba) from Streptococcus pyogenes serotype M3 (strain ATCC BAA-595 / MGAS315).